Here is a 161-residue protein sequence, read N- to C-terminus: Allophycocyanin alpha chain (161 aa).

Asparagine 71 is modified (N4-methylasparagine). Cysteine 81 provides a ligand contact to (2R,3E)-phycocyanobilin.

This sequence belongs to the phycobiliprotein family. In terms of assembly, heterodimer of an alpha and a beta chain. In terms of processing, contains one covalently linked phycocyanobilin chromophore.

The protein localises to the cellular thylakoid membrane. Functionally, light-harvesting photosynthetic bile pigment-protein from the phycobiliprotein complex. Allophycocyanin has a maximum absorption at approximately 650 nanometers. In Thermosynechococcus vestitus (strain NIES-2133 / IAM M-273 / BP-1), this protein is Allophycocyanin alpha chain (apcA).